The primary structure comprises 140 residues: Large ribosomal subunit protein bL17 (140 aa).

The protein belongs to the bacterial ribosomal protein bL17 family. In terms of assembly, part of the 50S ribosomal subunit. Contacts protein L32.

This is Large ribosomal subunit protein bL17 from Roseobacter denitrificans (strain ATCC 33942 / OCh 114) (Erythrobacter sp. (strain OCh 114)).